Here is a 1823-residue protein sequence, read N- to C-terminus: Vitellogenin (1823 aa).

A signal peptide spans M1–A14. Q17 bears the Pyrrolidone carboxylic acid mark. A Vitellogenin domain is found at F18–V658. A disordered region spans residues K953–A986. A compositionally biased stretch (low complexity) spans Q958–Q976. An N-linked (GlcNAc...) asparagine glycan is attached at N1097. The tract at residues S1119–L1289 is disordered. Low complexity-rich tracts occupy residues P1128–D1149 and S1178–S1192. Residues S1194–A1206 show a composition bias toward basic residues. Low complexity-rich tracts occupy residues S1217–S1238 and S1253–S1286. N1298 carries N-linked (GlcNAc...) asparagine glycosylation. Residues V1308–S1351 form a disordered region. Over residues S1323–D1344 the composition is skewed to low complexity. The VWFD domain maps to S1564–G1732. Cystine bridges form between C1566–C1695 and C1589–C1731. N1675 is a glycosylation site (N-linked (GlcNAc...) asparagine).

Post-translationally, what corresponds to phosvitin in other species is lost during maturation of vitellogenin to lipovitellin. Produced by the liver, secreted into the blood and then sequestered by receptor mediated endocytosis into growing oocytes, where it is generally cleaved, giving rise to the respective yolk components lipovitellins 1 and 2.

Precursor of the major egg-yolk proteins that are sources of nutrients during early development of oviparous organisms. This is Vitellogenin from Ichthyomyzon unicuspis (Silver lamprey).